The following is a 325-amino-acid chain: Endo-1,4-beta-xylanase 2 (325 aa).

Positions 1 to 18 are cleaved as a signal peptide; sequence MLYTSIFAAAMAASGAMA. The region spanning 26–325 is the GH10 domain; the sequence is ASNCTTLDSF…KAAVKAIMAI (300 aa). Asparagine 28 carries N-linked (GlcNAc...) asparagine glycosylation. Glutamate 157 (proton donor) is an active-site residue. The active-site Nucleophile is glutamate 262. The cysteines at positions 280 and 286 are disulfide-linked.

Belongs to the glycosyl hydrolase 10 (cellulase F) family.

It is found in the secreted. The catalysed reaction is Endohydrolysis of (1-&gt;4)-beta-D-xylosidic linkages in xylans.. It participates in glycan degradation; xylan degradation. In terms of biological role, endo-1,4-beta-xylanase involved in the hydrolysis of xylan, a major structural heterogeneous polysaccharide found in plant biomass representing the second most abundant polysaccharide in the biosphere, after cellulose. This is Endo-1,4-beta-xylanase 2 (xyl2) from Claviceps purpurea (Ergot fungus).